An 80-amino-acid polypeptide reads, in one-letter code: Raniseptin-7 (80 aa).

The signal sequence occupies residues 1-22 (MAFLKKSLFLVLFLGIVSLSIC). Positions 23-49 (EEEKREGEEEEKQEEENEELSEEELRE) are excised as a propeptide. The disordered stretch occupies residues 27 to 46 (REGEEEEKQEEENEELSEEE). The segment covering 30–44 (EEEEKQEEENEELSE) has biased composition (acidic residues).

Belongs to the frog skin active peptide (FSAP) family. Dermaseptin subfamily. Expressed by the skin glands.

It localises to the secreted. Functionally, has antibacterial activity. This is Raniseptin-7 from Boana raniceps (Chaco tree frog).